The chain runs to 622 residues: DNA mismatch repair protein MutL (622 aa).

Belongs to the DNA mismatch repair MutL/HexB family.

Functionally, this protein is involved in the repair of mismatches in DNA. It is required for dam-dependent methyl-directed DNA mismatch repair. May act as a 'molecular matchmaker', a protein that promotes the formation of a stable complex between two or more DNA-binding proteins in an ATP-dependent manner without itself being part of a final effector complex. The chain is DNA mismatch repair protein MutL from Phenylobacterium zucineum (strain HLK1).